Here is a 107-residue protein sequence, read N- to C-terminus: ATP-dependent Clp protease adapter protein ClpS (107 aa).

The protein belongs to the ClpS family. Binds to the N-terminal domain of the chaperone ClpA.

Its function is as follows. Involved in the modulation of the specificity of the ClpAP-mediated ATP-dependent protein degradation. The sequence is that of ATP-dependent Clp protease adapter protein ClpS from Syntrophus aciditrophicus (strain SB).